Here is a 260-residue protein sequence, read N- to C-terminus: Ubiquinone/menaquinone biosynthesis C-methyltransferase UbiE (260 aa).

Residues threonine 83, aspartate 104, 132–133 (NA), and serine 149 each bind S-adenosyl-L-methionine.

Belongs to the class I-like SAM-binding methyltransferase superfamily. MenG/UbiE family.

The catalysed reaction is a 2-demethylmenaquinol + S-adenosyl-L-methionine = a menaquinol + S-adenosyl-L-homocysteine + H(+). The enzyme catalyses a 2-methoxy-6-(all-trans-polyprenyl)benzene-1,4-diol + S-adenosyl-L-methionine = a 5-methoxy-2-methyl-3-(all-trans-polyprenyl)benzene-1,4-diol + S-adenosyl-L-homocysteine + H(+). The protein operates within quinol/quinone metabolism; menaquinone biosynthesis; menaquinol from 1,4-dihydroxy-2-naphthoate: step 2/2. It functions in the pathway cofactor biosynthesis; ubiquinone biosynthesis. Functionally, methyltransferase required for the conversion of demethylmenaquinol (DMKH2) to menaquinol (MKH2) and the conversion of 2-polyprenyl-6-methoxy-1,4-benzoquinol (DDMQH2) to 2-polyprenyl-3-methyl-6-methoxy-1,4-benzoquinol (DMQH2). The polypeptide is Ubiquinone/menaquinone biosynthesis C-methyltransferase UbiE (Vibrio vulnificus (strain CMCP6)).